A 317-amino-acid polypeptide reads, in one-letter code: ATP synthase gamma chain (317 aa).

Belongs to the ATPase gamma chain family. F-type ATPases have 2 components, CF(1) - the catalytic core - and CF(0) - the membrane proton channel. CF(1) has five subunits: alpha(3), beta(3), gamma(1), delta(1), epsilon(1). CF(0) has three main subunits: a, b and c.

It localises to the cellular thylakoid membrane. In terms of biological role, produces ATP from ADP in the presence of a proton gradient across the membrane. The gamma chain is believed to be important in regulating ATPase activity and the flow of protons through the CF(0) complex. This Synechococcus sp. (strain CC9311) protein is ATP synthase gamma chain.